We begin with the raw amino-acid sequence, 339 residues long: Phosphate acyltransferase (339 aa).

It belongs to the PlsX family. As to quaternary structure, homodimer. Probably interacts with PlsY.

It localises to the cytoplasm. The catalysed reaction is a fatty acyl-[ACP] + phosphate = an acyl phosphate + holo-[ACP]. It functions in the pathway lipid metabolism; phospholipid metabolism. Its function is as follows. Catalyzes the reversible formation of acyl-phosphate (acyl-PO(4)) from acyl-[acyl-carrier-protein] (acyl-ACP). This enzyme utilizes acyl-ACP as fatty acyl donor, but not acyl-CoA. In Helicobacter acinonychis (strain Sheeba), this protein is Phosphate acyltransferase.